We begin with the raw amino-acid sequence, 298 residues long: tRNA dimethylallyltransferase (298 aa).

Residue Gly-10 to Ser-17 coordinates ATP. Residue Thr-12–Ser-17 participates in substrate binding. Residues Asp-35–Gln-38 are interaction with substrate tRNA.

The protein belongs to the IPP transferase family. As to quaternary structure, monomer. Mg(2+) serves as cofactor.

The enzyme catalyses adenosine(37) in tRNA + dimethylallyl diphosphate = N(6)-dimethylallyladenosine(37) in tRNA + diphosphate. In terms of biological role, catalyzes the transfer of a dimethylallyl group onto the adenine at position 37 in tRNAs that read codons beginning with uridine, leading to the formation of N6-(dimethylallyl)adenosine (i(6)A). The chain is tRNA dimethylallyltransferase from Picosynechococcus sp. (strain ATCC 27264 / PCC 7002 / PR-6) (Agmenellum quadruplicatum).